A 147-amino-acid polypeptide reads, in one-letter code: MQIESSYLGSIDIDVKKILQFPAGLPGFAEEKEFVILEIPENPMFHVLQSVHNPNLAFVITDPYQIYTSYTFELDDYTIESLQITSQEDVAVFAIMTLKEPFHKSTINLKAPIVINMKKQLAKQYVLNLDEYSSQASIQSPPLKEGE.

The protein belongs to the FliW family. As to quaternary structure, interacts with translational regulator CsrA and flagellin(s).

The protein resides in the cytoplasm. Acts as an anti-CsrA protein, binds CsrA and prevents it from repressing translation of its target genes, one of which is flagellin. Binds to flagellin and participates in the assembly of the flagellum. This chain is Flagellar assembly factor FliW, found in Oceanobacillus iheyensis (strain DSM 14371 / CIP 107618 / JCM 11309 / KCTC 3954 / HTE831).